The chain runs to 748 residues: Ribonucleoprotein PTB-binding 1 (748 aa).

A disordered region spans residues 1–42 (MAADVSVTHRPPLSPEAEAEAETPETVDRRTPEQELPPLDPE). The residue at position 2 (alanine 2) is an N-acetylalanine. 2 positions are modified to phosphoserine: serine 6 and serine 14. A Phosphothreonine modification is found at threonine 31. Residues 45–60 (RKRLEHTERQFRNRRK) carry the Nuclear localization signal motif. RRM domains lie at 59–130 (RKIL…LQPT), 132–210 (ALLC…WTDA), and 221–299 (RCLC…FCAP). Residues 307–401 (LAALIAAQAT…QSQSQKKPGI (95 aa)) form an interaction with PTBP1 region. Disordered stretches follow at residues 390–505 (QSQS…GEPP), 525–647 (SNLA…PLSH), and 672–731 (KAVG…QHSQ). The residue at position 469 (threonine 469) is a Phosphothreonine. A phosphoserine mark is found at serine 480, serine 576, serine 626, and serine 630. A compositionally biased stretch (low complexity) spans 675–685 (GSSPMGSSEGL). Phosphoserine occurs at positions 716 and 720. Residues 743–746 (KRKR) carry the Nuclear localization signal motif.

Interacts with PTBP1, RAVER2, VCL and ACTN1. Part of a complex containing RAVER1, VCL and ACTN1. In terms of tissue distribution, ubiquitous. Detected in aorta, brain, gut, heart, kidney, liver, spleen, uterus and skeletal muscle.

The protein localises to the nucleus. Its subcellular location is the cytoplasm. Functionally, cooperates with PTBP1 to modulate regulated alternative splicing events. Promotes exon skipping. Cooperates with PTBP1 to modulate switching between mutually exclusive exons during maturation of the TPM1 pre-mRNA. The protein is Ribonucleoprotein PTB-binding 1 (Raver1) of Rattus norvegicus (Rat).